Reading from the N-terminus, the 65-residue chain is Large ribosomal subunit protein bL35 (65 aa).

Belongs to the bacterial ribosomal protein bL35 family.

This chain is Large ribosomal subunit protein bL35, found in Aliarcobacter butzleri (strain RM4018) (Arcobacter butzleri).